The primary structure comprises 560 residues: Vesicular glutamate transporter 1 (560 aa).

Residues 1-63 are Cytoplasmic-facing; it reads MEFRQEEFRK…CTCFGLPRRY (63 aa). A helical membrane pass occupies residues 64-84; that stretch reads IIAIMSGLGFCISFGIRCNLG. Topologically, residues 85–116 are extracellular; it reads VAIVSMVNNSTTHRGGHVVMQKAQFNWDPETV. The helical transmembrane segment at 117-137 threads the bilayer; sequence GLIHGSFFWGYIVTQIPGGFI. Residues 138–140 lie on the Cytoplasmic side of the membrane; sequence CQK. The chain crosses the membrane as a helical span at residues 141 to 161; the sequence is FAANRVFGFAIVATSTLNMLI. At 162–169 the chain is on the extracellular side; sequence PSAARVHY. A helical transmembrane segment spans residues 170–190; sequence GCVIFVRILQGLVEGVTYPAC. Residues 191–208 are Cytoplasmic-facing; the sequence is HGIWSKWAPPLERSRLAT. A helical transmembrane segment spans residues 209–229; the sequence is TAFCGSYAGAVVAMPLAGVLV. The Extracellular segment spans residues 230–236; the sequence is QYSGWSS. Residues 237–257 traverse the membrane as a helical segment; the sequence is VFYVYGSFGIFWYLFWLLVSY. The Cytoplasmic portion of the chain corresponds to 258-302; sequence ESPALHPSISEEERKYIEDAIGESAKLMNPVTKFNTPWRRFFTSM. The helical transmembrane segment at 303 to 323 threads the bilayer; that stretch reads PVYAIIVANFCRSWTFYLLLI. Over 324 to 341 the chain is Extracellular; it reads SQPAYFEEVFGFEISKVG. Residues 342 to 362 form a helical membrane-spanning segment; that stretch reads LVSALPHLVMTIIVPIGGQIA. Residues 363–378 lie on the Cytoplasmic side of the membrane; that stretch reads DFLRSRRIMSTTNVRK. The chain crosses the membrane as a helical span at residues 379–399; that stretch reads LMNCGGFGMEATLLLVVGYSH. The Extracellular segment spans residues 400 to 401; the sequence is SK. A helical transmembrane segment spans residues 402 to 422; that stretch reads GVAISFLVLAVGFSGFAISGF. Topologically, residues 423–435 are cytoplasmic; that stretch reads NVNHLDIAPRYAS. Residues 436–456 form a helical membrane-spanning segment; the sequence is ILMGISNGVGTLSGMVCPIIV. At 457-469 the chain is on the extracellular side; that stretch reads GAMTKHKTREEWQ. A helical transmembrane segment spans residues 470–490; the sequence is YVFLIASLVHYGGVIFYGVFA. Over 491 to 560 the chain is Cytoplasmic; the sequence is SGEKQPWAEP…PRPPPPVRDY (70 aa). Residues 497 to 560 form a disordered region; the sequence is WAEPEEMSEE…PRPPPPVRDY (64 aa). S504 is subject to Phosphoserine. Acidic residues predominate over residues 520 to 529; the sequence is DESEMEDEAE. Pro residues-rich tracts occupy residues 531 to 540 and 550 to 560; these read PGAPPAPPPS and PPRPPPPVRDY.

It belongs to the major facilitator superfamily. Sodium/anion cotransporter family. VGLUT subfamily. Interacts with SHANK3.

The protein resides in the cytoplasmic vesicle. The protein localises to the secretory vesicle. It localises to the synaptic vesicle membrane. It is found in the cell membrane. Its subcellular location is the synapse. The protein resides in the synaptosome. It catalyses the reaction L-glutamate(out) = L-glutamate(in). It carries out the reaction chloride(in) = chloride(out). The catalysed reaction is 3 Na(+)(out) + phosphate(out) = 3 Na(+)(in) + phosphate(in). The enzyme catalyses phosphate(in) = phosphate(out). It catalyses the reaction K(+)(in) + H(+)(out) = K(+)(out) + H(+)(in). Its activity is regulated as follows. Chloride channel activity is allosterically activated by lumenal H(+) and Cl(-) leading to synaptic vesicles acidification. The L-glutamate transport activity is allosterically activated by lumenal H(+) and Cl(-). The allosteric activation by H(+) efficiently prevents non-vesicular efflux across the plasma membrane, thereby restricting L-glutamate transport activity to acidic membranes such as synaptic vesicles. Multifunctional transporter that transports L-glutamate as well as multiple ions such as chloride, proton, potassium, sodium and phosphate. At the synaptic vesicle membrane, mainly functions as an uniporter which transports preferentially L-glutamate but also phosphate from the cytoplasm into synaptic vesicles at presynaptic nerve terminals of excitatory neural cells. The L-glutamate or phosphate uniporter activity is electrogenic and is driven by the proton electrochemical gradient, mainly by the electrical gradient established by the vacuolar H(+)-ATPase across the synaptic vesicle membrane. In addition, functions as a chloride channel that allows a chloride permeation through the synaptic vesicle membrane that affects the proton electrochemical gradient and promotes synaptic vesicles acidification. Moreover, may function as a K(+)/H(+) antiport allowing to maintain the electrical gradient and to decrease chemical gradient and therefore sustain vesicular glutamate uptake. The vesicular K(+)/H(+) antiport activity is electroneutral. At the plasma membrane, following exocytosis, functions as a symporter of Na(+) and phosphate from the extracellular space to the cytoplasm allowing synaptic phosphate homeostasis regulation. The symporter activity is driven by an inside negative membrane potential and is electrogenic. Is necessary for synaptic signaling of visual-evoked responses from photoreceptors. This Bos taurus (Bovine) protein is Vesicular glutamate transporter 1.